Here is a 590-residue protein sequence, read N- to C-terminus: Hyaluronan synthase 1 (590 aa).

The Cytoplasmic segment spans residues 1–31 (MKDKAAATMEIPEDPGIPKNLERKRPIVWRM). Residues 32 to 52 (IYYSFAVLLLAAFTAAYVTEF) form a helical membrane-spanning segment. Residues 53 to 60 (QILTHEDV) are Extracellular-facing. The chain crosses the membrane as a helical span at residues 61-81 (LFSLGLYGLVMFLHLMMQSLF). Residues 82 to 401 (AYLEIRRINK…YNAQWWYKHH (320 aa)) are Cytoplasmic-facing. A helical transmembrane segment spans residues 402-422 (IWMTYESVVHFIFPFFITATV). Topologically, residues 423 to 425 (IRL) are extracellular. The helical transmembrane segment at 426–446 (LYASTIWNVVWLLLCIQIMSV) threads the bilayer. At 447–456 (LKSLYACWLR) the chain is on the cytoplasmic side. A helical membrane pass occupies residues 457 to 477 (GNPIMLLMSLYSMLYMTGLLP). The Extracellular portion of the chain corresponds to 478–505 (SKYFAMLTINKSGWGTSGRKKIVGNYMP). Residues 506–526 (VLPLSIWMAVLCGGVGYSIYM) form a helical membrane-spanning segment. At 527 to 543 (DCHQDWSTPEKQKELYH) the chain is on the cytoplasmic side. The helical transmembrane segment at 544-564 (LLYGCISYTLYWVLMALMYWV) threads the bilayer. At 565–588 (WVKRCCRKRSQTVTLVHDIPERLV) the chain is on the extracellular side.

Belongs to the NodC/HAS family. Mg(2+) serves as cofactor.

It localises to the membrane. The enzyme catalyses [hyaluronan](n) + UDP-N-acetyl-alpha-D-glucosamine = N-acetyl-beta-D-glucosaminyl-(1-&gt;4)-[hyaluronan](n) + UDP + H(+). It carries out the reaction N-acetyl-beta-D-glucosaminyl-(1-&gt;4)-[hyaluronan](n) + UDP-alpha-D-glucuronate = [hyaluronan](n+1) + UDP + H(+). The protein operates within glycan biosynthesis; hyaluronan biosynthesis. Catalyzes the addition of GlcNAc or GlcUA monosaccharides to the nascent hyaluronan polymer. Therefore, it is essential to hyaluronan synthesis a major component of most extracellular matrices that has a structural role in tissues architectures and regulates cell adhesion, migration and differentiation. Also able to catalyze the synthesis of chito-oligosaccharide depending on the substrate. This Xenopus tropicalis (Western clawed frog) protein is Hyaluronan synthase 1 (has1).